Reading from the N-terminus, the 353-residue chain is Glycerol-3-phosphate dehydrogenase [NAD(P)+] (353 aa).

Positions 11, 40, and 115 each coordinate NADPH. Positions 115, 156, and 158 each coordinate sn-glycerol 3-phosphate. Ala160 lines the NADPH pocket. Sn-glycerol 3-phosphate-binding residues include Lys211, Asp264, Ser274, Arg275, and Asn276. Catalysis depends on Lys211, which acts as the Proton acceptor. Residue Arg275 coordinates NADPH. NADPH-binding residues include Val299 and Glu301.

Belongs to the NAD-dependent glycerol-3-phosphate dehydrogenase family.

The protein resides in the cytoplasm. It catalyses the reaction sn-glycerol 3-phosphate + NAD(+) = dihydroxyacetone phosphate + NADH + H(+). The catalysed reaction is sn-glycerol 3-phosphate + NADP(+) = dihydroxyacetone phosphate + NADPH + H(+). Its pathway is membrane lipid metabolism; glycerophospholipid metabolism. Functionally, catalyzes the reduction of the glycolytic intermediate dihydroxyacetone phosphate (DHAP) to sn-glycerol 3-phosphate (G3P), the key precursor for phospholipid synthesis. This is Glycerol-3-phosphate dehydrogenase [NAD(P)+] from Polaromonas sp. (strain JS666 / ATCC BAA-500).